The following is a 205-amino-acid chain: Holliday junction branch migration complex subunit RuvA (205 aa).

Positions 1–64 (MIGHIQGVLT…EDAQLLYGFI (64 aa)) are domain I. A domain II region spans residues 65 to 143 (SASERSLFRL…DWQPSTPFTD (79 aa)). Residues 136-157 (QPSTPFTDRAPLDSQGMDAREH) are disordered. A flexible linker region spans residues 144–156 (RAPLDSQGMDARE). Residues 157 to 205 (HPADARTDAISALQSLGYKENQAEKALQKVYSAEHNSETLIRLALKQLS) form a domain III region.

It belongs to the RuvA family. In terms of assembly, homotetramer. Forms an RuvA(8)-RuvB(12)-Holliday junction (HJ) complex. HJ DNA is sandwiched between 2 RuvA tetramers; dsDNA enters through RuvA and exits via RuvB. An RuvB hexamer assembles on each DNA strand where it exits the tetramer. Each RuvB hexamer is contacted by two RuvA subunits (via domain III) on 2 adjacent RuvB subunits; this complex drives branch migration. In the full resolvosome a probable DNA-RuvA(4)-RuvB(12)-RuvC(2) complex forms which resolves the HJ.

It is found in the cytoplasm. Functionally, the RuvA-RuvB-RuvC complex processes Holliday junction (HJ) DNA during genetic recombination and DNA repair, while the RuvA-RuvB complex plays an important role in the rescue of blocked DNA replication forks via replication fork reversal (RFR). RuvA specifically binds to HJ cruciform DNA, conferring on it an open structure. The RuvB hexamer acts as an ATP-dependent pump, pulling dsDNA into and through the RuvAB complex. HJ branch migration allows RuvC to scan DNA until it finds its consensus sequence, where it cleaves and resolves the cruciform DNA. The sequence is that of Holliday junction branch migration complex subunit RuvA from Idiomarina loihiensis (strain ATCC BAA-735 / DSM 15497 / L2-TR).